The following is a 509-amino-acid chain: MPQLENNEPLLINEEEEEETAYDETEKVHIVRNEEEDDLEHGVGCGGAPPFSWKKLWLFTGPGFLMSIAFLDPGNLEGDLQAGAVAGYSLLWLLMWATAMGLLVQLLSARLGVATGRHLAELCRDEYPTWARMVLWVMAELALIGSDIQEVIGSAIAIKILSNGILPLWAGVVITALDCFVFLFLENYGIRKLEAVFAVLIATMGVSFAWMFGQAKPSGSELLIGILVPKLSSRTIQKAVGVVGCIIMPHNVFLHSALVQSREVDKRQKYRVQEALNYYTIESTIALFISFLINLFVTTVFAKGFYNTDLANSIGLVNAGQYLQEKYGGGVFPILYIWAIGLLAAGQSSTITGTYAGQFIMGGFLNFKMKKWLRALITRSCAIIPTIIVALVFDSSEATLDVLNEWLNVLQSIQIPFALIPLLCLVSKEQIMGSFKIGPLYKTIAWLVAALVIMINGYLLLEFFSNEVSGIVYTGFVTLFTASYGAFILYLIARGITFTPWPFKAESSH.

A compositionally biased stretch (low complexity) spans 1–12; sequence MPQLENNEPLLI. Residues 1 to 25 are disordered; it reads MPQLENNEPLLINEEEEEETAYDET. Positions 13–23 are enriched in acidic residues; sequence NEEEEEETAYD. Transmembrane regions (helical) follow at residues 56 to 76, 84 to 104, 133 to 153, 165 to 185, 193 to 213, 239 to 259, 285 to 305, 327 to 347, 383 to 403, 406 to 426, 444 to 464, and 472 to 492; these read LWLF…PGNL, AVAG…GLLV, MVLW…EVIG, ILPL…FLFL, LEAV…WMFG, AVGV…SALV, IALF…AKGF, YGGG…AAGQ, IIPT…LDVL, WLNV…LCLV, IAWL…LEFF, and VYTG…LYLI.

It belongs to the NRAMP (TC 2.A.55) family. In terms of tissue distribution, expressed in vascular tissues.

It is found in the vacuole membrane. Functionally, vacuolar metal transporter involved in intracellular metal homeostasis. Can transport iron (Fe), manganese (Mn) and cadmium (Cd). Regulates metal accumulation under Fe starvation. Acts redundantly with NRAMP4 to mobilize vacuolar Fe and provide sufficient Fe during seed germination. In association with NRAMP4, required for optimal growth and photosynthesis under Mn deficiency. Exports Mn from vacuoles in leaf mesophyll cells, making Mn available for functional photosystem II in chloroplasts. Involved in basal resistance to the bacterial pathogen E.chrysanthemi. The chain is Metal transporter Nramp3 (NRAMP3) from Arabidopsis thaliana (Mouse-ear cress).